The chain runs to 115 residues: Synaptobrevin homolog 2 (115 aa).

Low complexity predominate over residues 1–16; that stretch reads MSSSVPYDPYVPPEES. A disordered region spans residues 1–28; it reads MSSSVPYDPYVPPEESNSGANPNSQNKT. Residues 1–93 lie on the Cytoplasmic side of the membrane; sequence MSSSVPYDPY…MWWKDLKMRM (93 aa). Over residues 17-28 the composition is skewed to polar residues; that stretch reads NSGANPNSQNKT. The region spanning 27-87 is the v-SNARE coiled-coil homology domain; sequence KTAALRQEID…NRVRKQMWWK (61 aa). At serine 58 the chain carries Phosphoserine. Lysine 62 participates in a covalent cross-link: Glycyl lysine isopeptide (Lys-Gly) (interchain with G-Cter in ubiquitin). The S-palmitoyl cysteine moiety is linked to residue cysteine 94. A helical; Anchor for type IV membrane protein transmembrane segment spans residues 94-112; that stretch reads CLFLVVIILLVVIIVPIVV. Topologically, residues 113-115 are vesicular; sequence HFS.

This sequence belongs to the synaptobrevin family. Palmitoylated by SWF1.

It is found in the endomembrane system. Its function is as follows. SNC1 and SNC2 are vesicle-targeting proteins essential for normal secretory traffic between the Golgi and the plasma membrane. They may also be involved in vesicle fusion. The sequence is that of Synaptobrevin homolog 2 (SNC2) from Saccharomyces cerevisiae (strain ATCC 204508 / S288c) (Baker's yeast).